Reading from the N-terminus, the 245-residue chain is Demethylmenaquinone methyltransferase (245 aa).

S-adenosyl-L-methionine is bound by residues Thr-62, Asp-80, 105 to 106, and Ser-122; that span reads DA.

Belongs to the class I-like SAM-binding methyltransferase superfamily. MenG/UbiE family.

It carries out the reaction a 2-demethylmenaquinol + S-adenosyl-L-methionine = a menaquinol + S-adenosyl-L-homocysteine + H(+). Its pathway is quinol/quinone metabolism; menaquinone biosynthesis; menaquinol from 1,4-dihydroxy-2-naphthoate: step 2/2. Its function is as follows. Methyltransferase required for the conversion of demethylmenaquinol (DMKH2) to menaquinol (MKH2). This Clavibacter sepedonicus (Clavibacter michiganensis subsp. sepedonicus) protein is Demethylmenaquinone methyltransferase.